We begin with the raw amino-acid sequence, 237 residues long: Sugar fermentation stimulation protein homolog (237 aa).

Belongs to the SfsA family.

This Pseudomonas putida (strain W619) protein is Sugar fermentation stimulation protein homolog.